A 326-amino-acid polypeptide reads, in one-letter code: Malate dehydrogenase (326 aa).

Residue 11–17 (GAAGQIG) participates in NAD(+) binding. Substrate contacts are provided by Arg-92 and Arg-98. Residues Asn-105, Gln-112, and 129-131 (VGN) contribute to the NAD(+) site. Substrate-binding residues include Asn-131 and Arg-162. The Proton acceptor role is filled by His-187.

It belongs to the LDH/MDH superfamily. MDH type 2 family.

It catalyses the reaction (S)-malate + NAD(+) = oxaloacetate + NADH + H(+). Catalyzes the reversible oxidation of malate to oxaloacetate. This is Malate dehydrogenase from Alkalilimnicola ehrlichii (strain ATCC BAA-1101 / DSM 17681 / MLHE-1).